Consider the following 368-residue polypeptide: 3-dehydroquinate synthase (368 aa).

NAD(+) is bound by residues threonine 131 to threonine 132, lysine 144, and lysine 153. Zn(2+) contacts are provided by glutamate 186, histidine 249, and histidine 267.

It belongs to the sugar phosphate cyclases superfamily. Dehydroquinate synthase family. Co(2+) serves as cofactor. Requires Zn(2+) as cofactor. The cofactor is NAD(+).

It localises to the cytoplasm. The enzyme catalyses 7-phospho-2-dehydro-3-deoxy-D-arabino-heptonate = 3-dehydroquinate + phosphate. It functions in the pathway metabolic intermediate biosynthesis; chorismate biosynthesis; chorismate from D-erythrose 4-phosphate and phosphoenolpyruvate: step 2/7. In terms of biological role, catalyzes the conversion of 3-deoxy-D-arabino-heptulosonate 7-phosphate (DAHP) to dehydroquinate (DHQ). The sequence is that of 3-dehydroquinate synthase from Pelagibacter ubique (strain HTCC1062).